The chain runs to 265 residues: Thioredoxin-related transmembrane protein 2 homolog (265 aa).

Residues 1–32 form the signal peptide; the sequence is MLIPRLDEVRRALTAFHFFNTLLALAFPVIRS. Over 33-96 the chain is Extracellular; sequence TSLCDYVFAV…KIAGMFLFIR (64 aa). Residues 97 to 117 traverse the membrane as a helical segment; the sequence is ADILPGIIYILACLIVTVLFP. At 118-265 the chain is on the cytoplasmic side; that stretch reads EPVYNGPEQV…KKGAKAKKED (148 aa). The region spanning 126–230 is the Thioredoxin domain; it reads QVTYFQGEQL…RPLVNDSRRA (105 aa). Positions 262 to 265 match the Di-lysine motif motif; the sequence is KKED.

It is found in the membrane. The chain is Thioredoxin-related transmembrane protein 2 homolog from Caenorhabditis elegans.